Here is a 65-residue protein sequence, read N- to C-terminus: Lantipeptide Flvbeta.h (65 aa).

Positions 1-27 are cleaved as a propeptide — cleaved by FlvT; it reads MERYGHLAGVIPVDEIDDMFESNVIGG. Residue T28 is modified to 2,3-didehydrobutyrine; by FlvM2. The lanthionine (Ser-Cys); by FlvM2 cross-link spans 29–33; it reads SSIDC. The residue at position 30 (S30) is a 2,3-didehydroalanine (Ser); by FlvM2. 2,3-didehydrobutyrine; by FlvM2 is present on T44. The segment at residues 48–54 is a cross-link (beta-methyllanthionine (Thr-Cys); by FlvM2); it reads TVRIEFC. Positions 56 to 59 form a cross-link, lanthionine (Ser-Cys); by FlvM2; sequence SAAC. Positions 60 to 63 form a cross-link, beta-methyllanthionine (Thr-Cys); by FlvM2; that stretch reads TYSC.

In terms of processing, contains LL-lanthionine, DL-lanthionine, and DL-beta-methyllanthionine, when coepressed in E.coli with the flavecin synthetase FlvM2.

It localises to the secreted. Its function is as follows. Lanthionine-containing peptide that does probably not show antibacterial activity, since its analog [+2]Flvbeta.h does not show antibacterial activity against M.luteus. Also does not show antibiotic activity when tested with [Del2]Flvalpha.a, an analog of Flvalpha.a, which is encoded by the same operon than Flvbeta.h. The bactericidal activity of lantibiotics is based on depolarization of energized bacterial cytoplasmic membranes, initiated by the formation of aqueous transmembrane pores. The polypeptide is Lantipeptide Flvbeta.h (Ruminococcus flavefaciens).